The following is a 359-amino-acid chain: Mineralocorticoid receptor (359 aa).

Positions 1-49 (FKRAVEGQHNYLCAGRNDCIIDKIRRKNCPACRVRKCLQAGMNLGARKS) form a DNA-binding region, nuclear receptor. Residues Cys-13, Cys-19, Cys-29, and Cys-32 each coordinate Zn(2+). The NR C4-type zinc finger occupies 13-37 (CAGRNDCIIDKIRRKNCPACRVRKC). The interval 48–96 (KSKKPGKLKGVNEDSTPTKEGGQTCPGSGGGYLSSGEKELSTSPTNALV) is disordered. The interval 50 to 107 (KKPGKLKGVNEDSTPTKEGGQTCPGSGGGYLSSGEKELSTSPTNALVPHGPGGGLVTP) is hinge. In terms of domain architecture, NR LBD spans 108–339 (YLPPSICSVL…EFPEMLVEII (232 aa)). Residues Asn-145 and Gln-151 each coordinate 21-hydroxyprogesterone. 2 residues coordinate aldosterone: Asn-145 and Gln-151. Asn-145 and Gln-151 together coordinate progesterone. Positions 157–160 (KWAK) are important for coactivator binding. The 21-hydroxyprogesterone site is built by Arg-192 and Thr-320. Aldosterone-binding residues include Arg-192 and Thr-320. Progesterone-binding residues include Arg-192 and Thr-320.

Belongs to the nuclear hormone receptor family. NR3 subfamily.

It localises to the cytoplasm. The protein resides in the nucleus. In terms of biological role, receptor for both mineralocorticoids (MC) such as cortisol. Binds to mineralocorticoid response elements (MRE) and transactivates target genes. The effect of MC is to increase ion and water transport and thus raise extracellular fluid volume and blood pressure and lower potassium levels. The sequence is that of Mineralocorticoid receptor (nr3c2) from Oncorhynchus mykiss (Rainbow trout).